An 85-amino-acid chain; its full sequence is MANIKSAIKRAKLSEERRAHNASIKSDMRSAVKTVEALVTNNDLENAKEAFKTASKKLDKAARKGLIHQNAASRQKSRLAKQVNA.

Disordered stretches follow at residues 1-25 (MANI…ASIK) and 62-85 (ARKG…QVNA).

It belongs to the bacterial ribosomal protein bS20 family.

Functionally, binds directly to 16S ribosomal RNA. This chain is Small ribosomal subunit protein bS20, found in Bacillus cereus (strain G9842).